Reading from the N-terminus, the 156-residue chain is Ribosomal RNA large subunit methyltransferase H (156 aa).

S-adenosyl-L-methionine-binding positions include L73, G104, and 123–128; that span reads LSALTL.

This sequence belongs to the RNA methyltransferase RlmH family. In terms of assembly, homodimer.

It localises to the cytoplasm. The enzyme catalyses pseudouridine(1915) in 23S rRNA + S-adenosyl-L-methionine = N(3)-methylpseudouridine(1915) in 23S rRNA + S-adenosyl-L-homocysteine + H(+). In terms of biological role, specifically methylates the pseudouridine at position 1915 (m3Psi1915) in 23S rRNA. The protein is Ribosomal RNA large subunit methyltransferase H of Shewanella putrefaciens (strain CN-32 / ATCC BAA-453).